The chain runs to 298 residues: Acetylglutamate kinase (298 aa).

Residues 64–65, R86, and N195 contribute to the substrate site; that span reads GG.

This sequence belongs to the acetylglutamate kinase family. ArgB subfamily.

The protein localises to the cytoplasm. It carries out the reaction N-acetyl-L-glutamate + ATP = N-acetyl-L-glutamyl 5-phosphate + ADP. The protein operates within amino-acid biosynthesis; L-arginine biosynthesis; N(2)-acetyl-L-ornithine from L-glutamate: step 2/4. Catalyzes the ATP-dependent phosphorylation of N-acetyl-L-glutamate. The protein is Acetylglutamate kinase of Aquifex aeolicus (strain VF5).